Consider the following 179-residue polypeptide: ATP-dependent protease subunit HslV (179 aa).

The active site involves threonine 9. The Na(+) site is built by alanine 164, cysteine 167, and threonine 170.

The protein belongs to the peptidase T1B family. HslV subfamily. A double ring-shaped homohexamer of HslV is capped on each side by a ring-shaped HslU homohexamer. The assembly of the HslU/HslV complex is dependent on binding of ATP.

It localises to the cytoplasm. The enzyme catalyses ATP-dependent cleavage of peptide bonds with broad specificity.. Its activity is regulated as follows. Allosterically activated by HslU binding. Its function is as follows. Protease subunit of a proteasome-like degradation complex believed to be a general protein degrading machinery. This is ATP-dependent protease subunit HslV from Syntrophobacter fumaroxidans (strain DSM 10017 / MPOB).